The chain runs to 395 residues: Elongation factor Tu (395 aa).

A tr-type G domain is found at 10–204; it reads KPHVNIGTIG…AVDSYIPTPE (195 aa). The G1 stretch occupies residues 19-26; sequence GHVDHGKT. 19 to 26 is a binding site for GTP; the sequence is GHVDHGKT. Residue Thr-26 participates in Mg(2+) binding. The segment at 60 to 64 is G2; the sequence is GITIS. Residues 81–84 are G3; the sequence is DCPG. GTP is bound by residues 81–85 and 136–139; these read DCPGH and NKCD. The tract at residues 136–139 is G4; it reads NKCD. Positions 174-176 are G5; that stretch reads SAL.

The protein belongs to the TRAFAC class translation factor GTPase superfamily. Classic translation factor GTPase family. EF-Tu/EF-1A subfamily. As to quaternary structure, monomer. Post-translationally, phosphorylated on serine and/or threonine residue(s). Dephosphorylated by stp.

The protein localises to the cytoplasm. The catalysed reaction is GTP + H2O = GDP + phosphate + H(+). Functionally, GTP hydrolase that promotes the GTP-dependent binding of aminoacyl-tRNA to the A-site of ribosomes during protein biosynthesis. In Listeria innocua serovar 6a (strain ATCC BAA-680 / CLIP 11262), this protein is Elongation factor Tu.